The chain runs to 621 residues: UvrABC system protein C (621 aa).

The GIY-YIG domain maps to 20–98 (TAPGVYRMYA…IKSLTPRYNV (79 aa)). Residues 207–242 (DLLAEELIQAMQVASEHLEFEQAARLRDLLTSLRSM) enclose the UVR domain.

It belongs to the UvrC family. As to quaternary structure, interacts with UvrB in an incision complex.

It localises to the cytoplasm. The UvrABC repair system catalyzes the recognition and processing of DNA lesions. UvrC both incises the 5' and 3' sides of the lesion. The N-terminal half is responsible for the 3' incision and the C-terminal half is responsible for the 5' incision. The sequence is that of UvrABC system protein C from Xylella fastidiosa (strain Temecula1 / ATCC 700964).